The chain runs to 309 residues: Taste receptor type 2 member 8 (309 aa).

Residues 1 to 7 (MFSPADN) lie on the Extracellular side of the membrane. Residues 8–28 (IFIILITGEFILGILGNGYIA) traverse the membrane as a helical segment. Topologically, residues 29–50 (LVNWIDWIKKKKISTIDYILTN) are cytoplasmic. A helical membrane pass occupies residues 51 to 71 (LVISRICLISVMVVNGIVIAV). Residues 72–82 (YPDVYTKSKLQ) lie on the Extracellular side of the membrane. The helical transmembrane segment at 83–103 (IAICTFWTFANYLNMWITTCL) threads the bilayer. Over 104-131 (NVFYFLKIANSSHPLFLWLKQKIDMVVR) the chain is Cytoplasmic. The chain crosses the membrane as a helical span at residues 132-152 (WILLGCFAISLLVSLIAAIVL). Topologically, residues 153 to 184 (SYDYRFHAIAKHKRNITEMFHVSKRPYFEPLT) are extracellular. An N-linked (GlcNAc...) asparagine glycan is attached at Asn167. A helical membrane pass occupies residues 185-205 (LFNLFAIVPFIVSLISFFLLV). The Cytoplasmic portion of the chain corresponds to 206–239 (RSLWRHTKQIKLYATGGRDPSTEVHVRAIKTMTS). The helical transmembrane segment at 240–260 (FIFLFFLYYISSILVTFSYLM) threads the bilayer. Topologically, residues 261-266 (TKYKLA) are extracellular. Residues 267–287 (VEFGEIVAILYPLGHSLILIV) traverse the membrane as a helical segment. Topologically, residues 288-309 (LNNKLRQTFVRMLTCRKIACVI) are cytoplasmic.

It belongs to the G-protein coupled receptor T2R family.

The protein localises to the membrane. Functionally, receptor that may play a role in the perception of bitterness and is gustducin-linked. May play a role in sensing the chemical composition of the gastrointestinal content. The activity of this receptor may stimulate alpha gustducin, mediate PLC-beta-2 activation and lead to the gating of TRPM5. The sequence is that of Taste receptor type 2 member 8 (TAS2R8) from Gorilla gorilla gorilla (Western lowland gorilla).